The sequence spans 221 residues: MTVAPFDAKALAQGLEQGAQALRLELTAVQQQQLLQHLALIDRWNRVYNLTAVREPAQMLTQHLLDSLAVVAPLRRQTRATAIALLDVGSGAGLPGVAIAVACPEIHVSCVDTVSKKASFIRQVGVELGLTHFQALHARVESLASSNFDVITSRAFASLADFVTLTEAALAPDGVWMAMKGQVPHEEMAVLPSSIEVFHVEPLQVPGLDAERCIVWMHRKG.

Residues Gly-89, Leu-94, 140–141, and Arg-154 contribute to the S-adenosyl-L-methionine site; that span reads VE.

It belongs to the methyltransferase superfamily. RNA methyltransferase RsmG family.

It is found in the cytoplasm. It catalyses the reaction guanosine(527) in 16S rRNA + S-adenosyl-L-methionine = N(7)-methylguanosine(527) in 16S rRNA + S-adenosyl-L-homocysteine. Functionally, specifically methylates the N7 position of guanine in position 527 of 16S rRNA. The protein is Ribosomal RNA small subunit methyltransferase G of Methylibium petroleiphilum (strain ATCC BAA-1232 / LMG 22953 / PM1).